We begin with the raw amino-acid sequence, 297 residues long: tRNA uridine(34) hydroxylase (297 aa).

The Rhodanese domain maps to 137–232 (RGDDVVFFDG…YGEKYGDKGL (96 aa)). Cys-192 functions as the Cysteine persulfide intermediate in the catalytic mechanism.

It belongs to the TrhO family.

It carries out the reaction uridine(34) in tRNA + AH2 + O2 = 5-hydroxyuridine(34) in tRNA + A + H2O. Catalyzes oxygen-dependent 5-hydroxyuridine (ho5U) modification at position 34 in tRNAs. The protein is tRNA uridine(34) hydroxylase of Corynebacterium urealyticum (strain ATCC 43042 / DSM 7109).